The sequence spans 254 residues: Methylthioribulose-1-phosphate dehydratase (254 aa).

Residue Cys-110 coordinates substrate. The Zn(2+) site is built by His-127 and His-129. The active-site Proton donor/acceptor is the Glu-156. A Zn(2+)-binding site is contributed by His-212.

It belongs to the aldolase class II family. MtnB subfamily. Zn(2+) serves as cofactor.

The protein resides in the cytoplasm. The enzyme catalyses 5-(methylsulfanyl)-D-ribulose 1-phosphate = 5-methylsulfanyl-2,3-dioxopentyl phosphate + H2O. It participates in amino-acid biosynthesis; L-methionine biosynthesis via salvage pathway; L-methionine from S-methyl-5-thio-alpha-D-ribose 1-phosphate: step 2/6. In terms of biological role, catalyzes the dehydration of methylthioribulose-1-phosphate (MTRu-1-P) into 2,3-diketo-5-methylthiopentyl-1-phosphate (DK-MTP-1-P). This is Methylthioribulose-1-phosphate dehydratase from Talaromyces marneffei (strain ATCC 18224 / CBS 334.59 / QM 7333) (Penicillium marneffei).